Reading from the N-terminus, the 556-residue chain is Amidophosphoribosyltransferase (556 aa).

The propeptide occupies 1-57; sequence MCLAVGVGVRAPKHVPQIRRLGRAGRRLRCVTNCALGSCPIVTVQQPGRDFSSPREE. Cysteine 58 acts as the Nucleophile in catalysis. The 227-residue stretch at 58–284 folds into the Glutamine amidotransferase type-2 domain; it reads CGVFGVWAPG…PGELLAIDAD (227 aa). A [4Fe-4S] cluster-binding site is contributed by cysteine 299. 3 residues coordinate Mg(2+): serine 346, aspartate 408, and aspartate 409. [4Fe-4S] cluster is bound by residues cysteine 445, cysteine 501, and cysteine 504.

It in the C-terminal section; belongs to the purine/pyrimidine phosphoribosyltransferase family. Mg(2+) serves as cofactor. It depends on [4Fe-4S] cluster as a cofactor.

The enzyme catalyses 5-phospho-beta-D-ribosylamine + L-glutamate + diphosphate = 5-phospho-alpha-D-ribose 1-diphosphate + L-glutamine + H2O. Its pathway is purine metabolism; IMP biosynthesis via de novo pathway; N(1)-(5-phospho-D-ribosyl)glycinamide from 5-phospho-alpha-D-ribose 1-diphosphate: step 1/2. Catalyzes the formation of phosphoribosylamine from phosphoribosylpyrophosphate (PRPP) and glutamine. The polypeptide is Amidophosphoribosyltransferase (Mycobacterium leprae (strain TN)).